Reading from the N-terminus, the 112-residue chain is C-type natriuretic peptide 3 (112 aa).

A signal peptide spans 1–19 (MSLRAFMLCVCLLLQSVGA). A propeptide spanning residues 20 to 90 (RPASELQNLE…SKRSWGRYKK (71 aa)) is cleaved from the precursor. The disordered stretch occupies residues 33-67 (QDQLSSTEHPEEDRLDRTREEPQLGGSSSREAADE). The span at 40–54 (EHPEEDRLDRTREEP) shows a compositional bias: basic and acidic residues. A disulfide bond links Cys96 and Cys112.

This sequence belongs to the natriuretic peptide family. In terms of tissue distribution, spinal cord, kidney, ovary, heart and spleen, and to a lower extent in brain and liver.

The protein localises to the secreted. Functionally, exhibits natriuretic and vasodepressant activity. Has cGMP-stimulating activity. May help to regulate body fluid homeostasis in a variety of aquatic environments. The protein is C-type natriuretic peptide 3 of Oryzias latipes (Japanese rice fish).